The following is a 578-amino-acid chain: L-2,3-diaminopropanoate--citrate ligase (578 aa).

It belongs to the IucA/IucC family. Forms a mixture of monomer and dimer in solution.

It catalyses the reaction (S)-2,3-diaminopropanoate + citrate + ATP = 2-[(L-alanin-3-ylcarbamoyl)methyl]-2-hydroxybutanedioate + AMP + diphosphate. The protein operates within siderophore biosynthesis. Catalyzes the synthesis of citryl-L-2,3-diaminopropionic acid from L-2,3-diaminopropionic acid (L-Dap) and citrate, the first step in staphyloferrin B biosynthesis. The sequence is that of L-2,3-diaminopropanoate--citrate ligase from Staphylococcus aureus (strain NCTC 8325 / PS 47).